We begin with the raw amino-acid sequence, 971 residues long: Nuclear factor NF-kappa-B p105 subunit (971 aa).

Positions 40-365 constitute an RHD domain; it reads PYLQILEQPK…EVQRKRQKLM (326 aa). An S-nitrosocysteine; alternate modification is found at Cys-59. The S-(15-deoxy-Delta12,14-prostaglandin J2-9-yl)cysteine; alternate moiety is linked to residue Cys-59. Lys-323 is covalently cross-linked (Glycyl lysine isopeptide (Lys-Gly) (interchain with G-Cter in SUMO2)). Ser-335 is modified (phosphoserine; by PKA). The short motif at 358-363 is the Nuclear localization signal element; that stretch reads QRKRQK. Residues 370–392 are GRR; the sequence is DSFGGGSGAGAGGGGMFGSGGGG. The segment at 433-971 is interaction with CFLAR; that stretch reads INTKFKNGPK…GQEGPIEGKI (539 aa). Position 438 is an N6-acetyllysine; by EP300 (Lys-438). Residues 439-470 are disordered; sequence NGPKDCAKSDDEESLTLPEKETEGEGPSLPMA. Ser-447 carries the phosphoserine modification. ANK repeat units follow at residues 538–567, 577–606, 610–639, 646–675, 680–710, and 714–743; these read NGDS…GLIS, LYQT…DLSL, WGNS…AAPL, EGLN…EVNA, SGRT…HVDS, and DGTT…DPLV. The interval 646-680 is essential for interaction with HIF1AN; that stretch reads EGLNAIHIAVMSNSLPCLLLLVAAGAEVNAQEQKS. (3S)-3-hydroxyasparagine; by HIF1AN is present on Asn-674. The residue at position 755 (Ser-755) is a Phosphoserine. Residues 767–797 form an ANK 7 repeat; the sequence is PGTTPLDMAANWQVFDILNGKPYEPVFTSDD. In terms of domain architecture, Death spans 801 to 888; it reads QGDMKQLTED…EAIEVIQAAF (88 aa). Ser-896 bears the Phosphoserine mark. Ser-910 carries the phosphoserine; by GSK3-beta; in vitro modification. Position 926 is a phosphoserine (Ser-926). 2 positions are modified to phosphoserine; by IKKB: Ser-930 and Ser-935. The residue at position 940 (Ser-940) is a Phosphoserine. Position 946 is a phosphothreonine (Thr-946).

Component of the NF-kappa-B p65-p50 complex. Homodimer; component of the NF-kappa-B p50-p50 complex. Component of the NF-kappa-B p105-p50 complex. Component of the NF-kappa-B p50-c-Rel complex. Component of a complex consisting of the NF-kappa-B p50-p50 homodimer and BCL3. Also interacts with MAP3K8. NF-kappa-B p50 subunit interacts with NCOA3 coactivator, which may coactivate NF-kappa-B dependent expression via its histone acetyltransferase activity. Interacts with TSC22D3; this interaction prevents nuclear translocation and DNA-binding. Interacts with SPAG9 and UNC5CL. NFKB1/p105 interacts with CFLAR; the interaction inhibits p105 processing into p50. NFKB1/p105 forms a ternary complex with MAP3K8 and TNIP2. Interacts with GSK3B; the interaction prevents processing of p105 to p50. NFKB1/p50 interacts with NFKBIE. NFKB1/p50 interacts with NFKBIZ. Nuclear factor NF-kappa-B p50 subunit interacts with NFKBID. Directly interacts with MEN1. Interacts with HIF1AN. Interacts with FEM1AA; interaction is direct. Generation of the NF-kappa-B p50 (Nuclear factor NF-kappa-B p50 subunit) transcription factor takes place both cotranslationally and post-translationally via non-mutually exclusive mechanisms. A cotranslational processing allows the production of both p50 and p105 (Nuclear factor NF-kappa-B p105 subunit) from a single NFKB1 mRNA. While translation occurs, the particular unfolded structure after the GRR repeat region acts as a substrate for the proteasome, promoting degradation of the C-terminus. The GRR acts as a proteasomal 'stop signal', protecting the region upstream of the GRR from degradation and promoting generation of p50. It is unclear if limited proteasome degradation during cotranslational processing depends on ubiquitination. NF-kappa-B p50 is also generated post-translationally following ubiquitination by the KPC complex, leading to limited processing by the proteasome downstream of the GRR region, thereby generating p50. Post-translationally, phosphorylation at the C-terminus by IKBKB/IKKB acts as a signal for ubiquitination and promotes either complete degradation or processing to generate the NF-kappa-B p50 (Nuclear factor NF-kappa-B p50 subunit). Phosphorylation at Ser-910 primes p105 for proteolytic processing in response to TNF-alpha stimulation. Phosphorylation at Ser-926, Ser-930 and Ser-935 are required for BTRC/BTRCP-mediated ubiquitination and proteolysis. Phosphorylation at Ser-930 is also required for ubiquitination by the KPC complex and limited processing to generate NF-kappa-B p50 (Nuclear factor NF-kappa-B p50 subunit). In terms of processing, polyubiquitinated at multiple Lys residues in the C-terminus. Polyubiquitinated by the SCF(FBXW11) and SCF(BTRC) complexes following phosphorylation at Ser-926, Ser-930 and Ser-935, leading to its complete degradation. In contrast, polyubiquitination by the KPC complex following phosphorylation at Ser-930 leads to limited proteosomal processing and generation of the active NF-kappa-B p50 (Nuclear factor NF-kappa-B p50 subunit). S-nitrosylation of Cys-59 affects DNA binding. Post-translationally, the covalent modification of cysteine by 15-deoxy-Delta12,14-prostaglandin-J2 is autocatalytic and reversible. It may occur as an alternative to other cysteine modifications, such as S-nitrosylation and S-palmitoylation.

It is found in the cytoplasm. The protein resides in the nucleus. In terms of biological role, NF-kappa-B is a pleiotropic transcription factor present in almost all cell types and is the endpoint of a series of signal transduction events that are initiated by a vast array of stimuli related to many biological processes such as inflammation, immunity, differentiation, cell growth, tumorigenesis and apoptosis. NF-kappa-B is a homo- or heterodimeric complex formed by the Rel-like domain-containing proteins RELA/p65, RELB, NFKB1/p105, NFKB1/p50, REL and NFKB2/p52 and the heterodimeric p65-p50 complex appears to be most abundant one. The dimers bind at kappa-B sites in the DNA of their target genes and the individual dimers have distinct preferences for different kappa-B sites that they can bind with distinguishable affinity and specificity. Different dimer combinations act as transcriptional activators or repressors, respectively. NF-kappa-B is controlled by various mechanisms of post-translational modification and subcellular compartmentalization as well as by interactions with other cofactors or corepressors. NF-kappa-B complexes are held in the cytoplasm in an inactive state complexed with members of the NF-kappa-B inhibitor (I-kappa-B) family. In a conventional activation pathway, I-kappa-B is phosphorylated by I-kappa-B kinases (IKKs) in response to different activators, subsequently degraded thus liberating the active NF-kappa-B complex which translocates to the nucleus. NF-kappa-B heterodimeric p65-p50 and RelB-p50 complexes are transcriptional activators. The NF-kappa-B p50-p50 homodimer is a transcriptional repressor, but can act as a transcriptional activator when associated with BCL3. NFKB1 appears to have dual functions such as cytoplasmic retention of attached NF-kappa-B proteins by p105 and generation of p50 by a cotranslational processing. The proteasome-mediated process ensures the production of both p50 and p105 and preserves their independent function, although processing of NFKB1/p105 also appears to occur post-translationally. p50 binds to the kappa-B consensus sequence 5'-GGRNNYYCC-3', located in the enhancer region of genes involved in immune response and acute phase reactions. Plays a role in the regulation of apoptosis. In a complex with MAP3K8, NFKB1/p105 represses MAP3K8-induced MAPK signaling; active MAP3K8 is released by proteasome-dependent degradation of NFKB1/p105. Its function is as follows. P105 is the precursor of the active p50 subunit (Nuclear factor NF-kappa-B p50 subunit) of the nuclear factor NF-kappa-B. Acts as a cytoplasmic retention of attached NF-kappa-B proteins by p105. Functionally, constitutes the active form, which associates with RELA/p65 to form the NF-kappa-B p65-p50 complex to form a transcription factor. Together with RELA/p65, binds to the kappa-B consensus sequence 5'-GGRNNYYCC-3', located in the enhancer region of genes involved in immune response and acute phase reactions. Isoform 3 (p98) (but not p84 or p105) acts as a transactivator of NF-kappa-B-regulated gene expression. In terms of biological role, acts as an inhibitor of transactivation of p50 NF-kappa-B subunit, probably by sequestering it in the cytoplasm. This Mus musculus (Mouse) protein is Nuclear factor NF-kappa-B p105 subunit (Nfkb1).